Consider the following 382-residue polypeptide: ATP phosphoribosyltransferase regulatory subunit (382 aa).

This sequence belongs to the class-II aminoacyl-tRNA synthetase family. HisZ subfamily. In terms of assembly, heteromultimer composed of HisG and HisZ subunits.

Its subcellular location is the cytoplasm. The protein operates within amino-acid biosynthesis; L-histidine biosynthesis; L-histidine from 5-phospho-alpha-D-ribose 1-diphosphate: step 1/9. Required for the first step of histidine biosynthesis. May allow the feedback regulation of ATP phosphoribosyltransferase activity by histidine. In Acidovorax ebreus (strain TPSY) (Diaphorobacter sp. (strain TPSY)), this protein is ATP phosphoribosyltransferase regulatory subunit.